The sequence spans 443 residues: Threonine/serine transporter TdcC (443 aa).

11 consecutive transmembrane segments (helical) span residues 22 to 42, 44 to 64, 97 to 117, 140 to 160, 163 to 183, 207 to 227, 261 to 281, 319 to 339, 366 to 386, 389 to 409, and 423 to 443; these read TTWT…FFPI, AGFG…PIAF, GVVI…IYGV, FVAL…KDLM, VMSY…LSLI, ILVT…FSPI, MLMV…LSPA, ASII…LGTL, ISMI…PNIL, IEAM…MYAI, and DNVF…YKLF.

The protein belongs to the amino acid/polyamine transporter 2 family. SdaC/TdcC subfamily.

Its subcellular location is the cell inner membrane. It catalyses the reaction L-threonine(in) + H(+)(in) = L-threonine(out) + H(+)(out). The enzyme catalyses L-serine(in) + H(+)(in) = L-serine(out) + H(+)(out). Involved in the import of threonine and serine into the cell, with the concomitant import of a proton (symport system). The sequence is that of Threonine/serine transporter TdcC from Citrobacter koseri (strain ATCC BAA-895 / CDC 4225-83 / SGSC4696).